The sequence spans 69 residues: Fumarase D (69 aa).

It belongs to the FumD family.

It catalyses the reaction (S)-malate = fumarate + H2O. In terms of biological role, in vitro catalyzes the addition of water to fumarate, forming malate. Cannot catalyze the reverse reaction. Cannot use the cis-isomer maleate as substrate. The chain is Fumarase D from Shigella flexneri.